The following is a 196-amino-acid chain: ATP-dependent Clp protease proteolytic subunit (196 aa).

The Nucleophile role is filled by Ser98. The active site involves His123.

The protein belongs to the peptidase S14 family. As to quaternary structure, fourteen ClpP subunits assemble into 2 heptameric rings which stack back to back to give a disk-like structure with a central cavity, resembling the structure of eukaryotic proteasomes.

The protein localises to the cytoplasm. The enzyme catalyses Hydrolysis of proteins to small peptides in the presence of ATP and magnesium. alpha-casein is the usual test substrate. In the absence of ATP, only oligopeptides shorter than five residues are hydrolyzed (such as succinyl-Leu-Tyr-|-NHMec, and Leu-Tyr-Leu-|-Tyr-Trp, in which cleavage of the -Tyr-|-Leu- and -Tyr-|-Trp bonds also occurs).. Functionally, cleaves peptides in various proteins in a process that requires ATP hydrolysis. Has a chymotrypsin-like activity. Plays a major role in the degradation of misfolded proteins. This is ATP-dependent Clp protease proteolytic subunit from Actinobacillus pleuropneumoniae serotype 5b (strain L20).